The sequence spans 230 residues: Thymidylate synthase 1 (230 aa).

92–93 is a dUMP binding site; sequence RR. The active-site Nucleophile is C112. DUMP-binding positions include 132 to 135, N143, and 173 to 175; these read RSND and HVY. Residue D135 coordinates (6R)-5,10-methylene-5,6,7,8-tetrahydrofolate.

This sequence belongs to the thymidylate synthase family. Bacterial-type ThyA subfamily. As to quaternary structure, homodimer.

The protein resides in the cytoplasm. It catalyses the reaction dUMP + (6R)-5,10-methylene-5,6,7,8-tetrahydrofolate = 7,8-dihydrofolate + dTMP. Its pathway is pyrimidine metabolism; dTTP biosynthesis. Catalyzes the reductive methylation of 2'-deoxyuridine-5'-monophosphate (dUMP) to 2'-deoxythymidine-5'-monophosphate (dTMP) while utilizing 5,10-methylenetetrahydrofolate (mTHF) as the methyl donor and reductant in the reaction, yielding dihydrofolate (DHF) as a by-product. This enzymatic reaction provides an intracellular de novo source of dTMP, an essential precursor for DNA biosynthesis. In Bacillus amyloliquefaciens (Bacillus velezensis), this protein is Thymidylate synthase 1.